The following is a 362-amino-acid chain: Probable peptidyl-prolyl cis-trans isomerase C27F1.06c (362 aa).

Phosphoserine is present on Ser-69. The interval 144–274 is disordered; the sequence is DEFSSDEEEM…KVKGDGPAAK (131 aa). Acidic residues-rich tracts occupy residues 146-167 and 175-189; these read FSSDEEEMDDISVTSSEEEEEE and LNSDEEDAEQAEEEI. Residue Ser-177 is modified to Phosphoserine. The segment covering 190-218 has biased composition (basic and acidic residues); sequence LEKPVPKDEVAEKHSKDKLKKEEKEKKTA. The PPIase FKBP-type domain occupies 276-362; it reads KKRVSMRYIG…VFDVKLLAVN (87 aa).

It belongs to the FKBP-type PPIase family. FKBP3/4 subfamily.

It catalyses the reaction [protein]-peptidylproline (omega=180) = [protein]-peptidylproline (omega=0). In terms of biological role, PPIases accelerate the folding of proteins. It catalyzes the cis-trans isomerization of proline imidic peptide bonds in oligopeptides. The sequence is that of Probable peptidyl-prolyl cis-trans isomerase C27F1.06c from Schizosaccharomyces pombe (strain 972 / ATCC 24843) (Fission yeast).